Here is a 505-residue protein sequence, read N- to C-terminus: Acetylcholine receptor subunit beta (505 aa).

An N-terminal signal peptide occupies residues 1 to 24; the sequence is MTPGALLLLLLGVLGAHLAPGARG. Over 25-245 the chain is Extracellular; it reads SEAEGRLREK…VTFYLIIRRK (221 aa). A disulfide bridge connects residues Cys-152 and Cys-166. A glycan (N-linked (GlcNAc...) asparagine) is linked at Asn-165. The next 3 helical transmembrane spans lie at 246–270, 278–295, and 312–333; these read PLFY…VFYL, MGLS…LLLL, and YLMF…VLNL. Residues 334–473 lie on the Cytoplasmic side of the membrane; the sequence is HHRSPHTHQM…WQFVAMVVDR (140 aa). The tract at residues 365 to 391 is disordered; that stretch reads KPERDQMQEPPSIAPRDSPGSGWGRGT. Tyr-394 is subject to Phosphotyrosine; by Tyr-kinases. A helical transmembrane segment spans residues 474–492; sequence LFLWTFIIFTSVGTLVIFL.

The protein belongs to the ligand-gated ion channel (TC 1.A.9) family. Acetylcholine receptor (TC 1.A.9.1) subfamily. Beta-1/CHRNB1 sub-subfamily. As to quaternary structure, pentamer of two alpha chains, and one each of the beta, delta, and gamma (in immature muscle) or epsilon (in mature muscle) chains. The muscle heteropentamer composed of alpha-1, beta-1, delta, epsilon subunits interacts with the alpha-conotoxin ImII.

The protein localises to the postsynaptic cell membrane. It localises to the cell membrane. It catalyses the reaction K(+)(in) = K(+)(out). It carries out the reaction Na(+)(in) = Na(+)(out). Functionally, after binding acetylcholine, the AChR responds by an extensive change in conformation that affects all subunits and leads to opening of an ion-conducting channel across the plasma membrane. The protein is Acetylcholine receptor subunit beta (CHRNB1) of Bos taurus (Bovine).